We begin with the raw amino-acid sequence, 222 residues long: Glutathione S-transferase alpha-1 (222 aa).

M1 is modified (N-acetylmethionine). The 81-residue stretch at 3–83 (GKPVLHYFNA…YIATKYDLYG (81 aa)) folds into the GST N-terminal domain. K4 carries the post-translational modification N6-succinyllysine. Glutathione contacts are provided by residues Y9, K45, 54–55 (QV), and 67–68 (QT). The region spanning 85 to 208 (DMKERALIDM…QPGSQRKLPV (124 aa)) is the GST C-terminal domain.

Belongs to the GST superfamily. Alpha family. Homodimer. Homodimer or heterodimer of GSTA1 and GSTA2.

The protein localises to the cytoplasm. It carries out the reaction RX + glutathione = an S-substituted glutathione + a halide anion + H(+). It catalyses the reaction prostaglandin A2 + glutathione = prostaglandin A2-S-(R)-glutathione. The enzyme catalyses prostaglandin J2 + glutathione = prostaglandin J2-S-(R)-glutathione. The catalysed reaction is (13S)-hydroperoxy-(9Z,11E)-octadecadienoate + 2 glutathione = (13S)-hydroxy-(9Z,11E)-octadecadienoate + glutathione disulfide + H2O. It carries out the reaction androst-5-ene-3,17-dione = androst-4-ene-3,17-dione. In terms of biological role, glutathione S-transferase that catalyzes the nucleophilic attack of the sulfur atom of glutathione on the electrophilic groups of a wide range of exogenous and endogenous compounds. Involved in the formation of glutathione conjugates of both prostaglandin A2 (PGA2) and prostaglandin J2 (PGJ2). It also catalyzes the isomerization of D5-androstene-3,17-dione (AD) into D4-androstene-3,17-dione and may therefore play an important role in hormone biosynthesis. Through its glutathione-dependent peroxidase activity toward the fatty acid hydroperoxide (13S)-hydroperoxy-(9Z,11E)-octadecadienoate/13-HPODE it is also involved in the metabolism of oxidized linoleic acid. The polypeptide is Glutathione S-transferase alpha-1 (Gsta1) (Rattus norvegicus (Rat)).